Consider the following 875-residue polypeptide: Phosphoenolpyruvate carboxylase (875 aa).

Residues His-137 and Lys-542 contribute to the active site.

Belongs to the PEPCase type 1 family. The cofactor is Mg(2+).

It carries out the reaction oxaloacetate + phosphate = phosphoenolpyruvate + hydrogencarbonate. In terms of biological role, forms oxaloacetate, a four-carbon dicarboxylic acid source for the tricarboxylic acid cycle. This chain is Phosphoenolpyruvate carboxylase, found in Pseudomonas putida (strain GB-1).